The following is a 325-amino-acid chain: Endo-1,4-beta-xylanase 2 (325 aa).

An N-terminal signal peptide occupies residues 1–18; that stretch reads MLYTSIFAAAMAASGAMA. A GH10 domain is found at 26–325; that stretch reads ASNCTTLDSF…KAAVKAIMAI (300 aa). N-linked (GlcNAc...) asparagine glycosylation is present at Asn-28. Catalysis depends on Glu-157, which acts as the Proton donor. Glu-262 (nucleophile) is an active-site residue. Cys-280 and Cys-286 are joined by a disulfide.

Belongs to the glycosyl hydrolase 10 (cellulase F) family.

It localises to the secreted. It catalyses the reaction Endohydrolysis of (1-&gt;4)-beta-D-xylosidic linkages in xylans.. It functions in the pathway glycan degradation; xylan degradation. Endo-1,4-beta-xylanase involved in the hydrolysis of xylan, a major structural heterogeneous polysaccharide found in plant biomass representing the second most abundant polysaccharide in the biosphere, after cellulose. This Claviceps purpurea (Ergot fungus) protein is Endo-1,4-beta-xylanase 2 (xyl2).